Here is a 119-residue protein sequence, read N- to C-terminus: MNLDQYLPVLLFILVGIGVGVVPLLLGYVLGPNRPDPAKNSPYECGFEAFEDARMKFDVRYYLVAILFILFDLEIAFLFPWAVTLQEVGVTGFVAVLVFLAILVVGFAYEWKKGALNWE.

3 consecutive transmembrane segments (helical) span residues 9–29 (VLLF…LGYV), 63–83 (LVAI…PWAV), and 88–108 (VGVT…VGFA).

Belongs to the complex I subunit 3 family. NDH-1 is composed of 14 different subunits. Subunits NuoA, H, J, K, L, M, N constitute the membrane sector of the complex.

The protein resides in the cell inner membrane. The enzyme catalyses a quinone + NADH + 5 H(+)(in) = a quinol + NAD(+) + 4 H(+)(out). In terms of biological role, NDH-1 shuttles electrons from NADH, via FMN and iron-sulfur (Fe-S) centers, to quinones in the respiratory chain. The immediate electron acceptor for the enzyme in this species is believed to be ubiquinone. Couples the redox reaction to proton translocation (for every two electrons transferred, four hydrogen ions are translocated across the cytoplasmic membrane), and thus conserves the redox energy in a proton gradient. In Acidovorax sp. (strain JS42), this protein is NADH-quinone oxidoreductase subunit A.